Consider the following 86-residue polypeptide: Gas vesicle protein M (86 aa).

The protein belongs to the gas vesicle GvpA family. GvpF to GvpM interact with each other in vitro, and may form multi-subunit complex(es). Might interact with GvpA.

It is found in the gas vesicle. Functionally, proteins GvpF to GvpM might be involved in nucleating gas vesicle formation. A minor component of the gas vesicle. Gas vesicles are small, hollow, gas filled protein structures found in some microorganisms. They allow positioning of halobacteria at the optimal depth for growth in the poorly aerated, shallow brine pools of their habitat. Expression of a 9.5 kb mc-vac DNA fragment containing 2 divergently transcribed regions (gvpD-gvpE-gvpF-gvpG-gvpH-gvpI-gvpJ-gvpK-gvpL-gvpM and gvpA-gvpC-gvpN-gvpO) allows H.volcanii to produce gas vesicles. The chain is Gas vesicle protein M from Haloferax mediterranei (strain ATCC 33500 / DSM 1411 / JCM 8866 / NBRC 14739 / NCIMB 2177 / R-4) (Halobacterium mediterranei).